A 509-amino-acid chain; its full sequence is MSLHLKPGQLTLADLRQAYLAPVRLSLDPSADAPVAASVACVENIIAEGRTAYGINTGFGLLASTRISPADLEKLQRSIVLSHAAGVGEALDDAMVRLVMLLKVNSLARGFSGIRRKVIDALIALINAEVYPHIPLKGSVGASGDLAPLAHMSLVLIGESRARHRGEWLPAAEALAVAGLEPLTLAAKEGLALLNGTQVSTAYALRGLFEAEDLFAAATVCGGLSVEAMLGSRAPFDARIHAARGQRGQIDVAAAYRDLLTASSEVARSHEKCDKVQDPYSLRCQPQVMGACLTQMRQAAEVLEIEANAVSDNPLVFAAEGDVISGGNFHAEPVAMAADNLALALAEIGSLSERRISLMMDMHMSQLPPFLVANGGVNSGFMIAQVTAAALASDNKALAHPASVDSLPTSANQEDHVSMAPNAGKRLWAMAENVRGILAVEWLGACQGLDFREGLKSSPKLEQARRLLRDKVPYYQEDRFFAPDIEAASQLLASGCLNALLPARLLPSL.

The segment at residues 142–144 (ASG) is a cross-link (5-imidazolinone (Ala-Gly)). A 2,3-didehydroalanine (Ser) modification is found at Ser-143.

It belongs to the PAL/histidase family. Post-translationally, contains an active site 4-methylidene-imidazol-5-one (MIO), which is formed autocatalytically by cyclization and dehydration of residues Ala-Ser-Gly.

Its subcellular location is the cytoplasm. It catalyses the reaction L-histidine = trans-urocanate + NH4(+). It participates in amino-acid degradation; L-histidine degradation into L-glutamate; N-formimidoyl-L-glutamate from L-histidine: step 1/3. In Pseudomonas aeruginosa (strain UCBPP-PA14), this protein is Histidine ammonia-lyase.